Consider the following 484-residue polypeptide: 6-phosphogluconate dehydrogenase, decarboxylating (484 aa).

NADP(+) contacts are provided by residues 11–16 (GLAVMG), 34–36 (NRT), 76–78 (VRA), and N104. Substrate is bound by residues N104 and 130–132 (SGG). Catalysis depends on K185, which acts as the Proton acceptor. 188-189 (HN) is a binding site for substrate. Catalysis depends on E192, which acts as the Proton donor. The substrate site is built by Y193, K262, R289, R447, and H453.

Belongs to the 6-phosphogluconate dehydrogenase family. In terms of assembly, homodimer.

It carries out the reaction 6-phospho-D-gluconate + NADP(+) = D-ribulose 5-phosphate + CO2 + NADPH. It functions in the pathway carbohydrate degradation; pentose phosphate pathway; D-ribulose 5-phosphate from D-glucose 6-phosphate (oxidative stage): step 3/3. Functionally, catalyzes the oxidative decarboxylation of 6-phosphogluconate to ribulose 5-phosphate and CO(2), with concomitant reduction of NADP to NADPH. The sequence is that of 6-phosphogluconate dehydrogenase, decarboxylating (gnd) from Haemophilus ducreyi (strain 35000HP / ATCC 700724).